The primary structure comprises 259 residues: Oxidase ustYb (259 aa).

A helical membrane pass occupies residues 36–56; that stretch reads IIYTSLAFVGFIEILFFGIFF. Asparagine 102 and asparagine 122 each carry an N-linked (GlcNAc...) asparagine glycan. 2 consecutive short sequence motifs (HXXHC) follow at residues 147–151 and 197–201; these read HQLHC and HVDHC.

The protein belongs to the ustYa family.

The protein resides in the membrane. Its pathway is mycotoxin biosynthesis. Oxidase; part of the gene cluster that mediates the biosynthesis of the secondary metabolite ustiloxin B, an antimitotic tetrapeptide. First, ustA is processed by the subtilisin-like endoprotease Kex2 that is outside the ustiloxin B gene cluster, at the C-terminal side of Arg-Lys, after transfer to Golgi apparatus through the endoplasmic reticulum (ER). Cleavage by KEX2 generates 16 peptides YAIG-I to YAIG-XVI. To process the precursor peptide further, at least two peptidases are necessary to cleave the N-terminal and C-terminal sides of the Tyr-Ala-Ile-Gly core peptide which serves as backbone for the synthesis of ustiloxin B, through cyclization and modification of the tyrosine with a non-protein coding amino acid, norvaline. One of the two peptidases must be the serine peptidase ustP; and the other pepdidase is probably ustH. Macrocyclization of the core peptide derived from ustA requires the tyrosinase ustQ, as well as the homologous oxidases ustYa and ustYb, and leads to the production of the first cyclization product N-desmethylustiloxin F. For the formation of N-desmethylustiloxin F, three oxidation steps are required, hydroxylation at the benzylic position, hydroxylation at either the aromatic ring of Tyr or beta-position of Ile, and oxidative cyclization. UstQ may catalyze the oxidation of a phenol moiety, whereas the ustYa and ustYb are most likely responsible for the remaining two-step oxidations. N-desmethylustiloxin F is then methylated by ustM to yield ustiloxin F which in turn substrate of the cytochrome P450 monooxygenase ustC which catalyzes the formation of S-deoxyustiloxin H. The flavoprotein monooxygenases ustF1 and ustF2 then participate in the modification of the side chain of S-deoxyustiloxin H, leading to the synthesis of an oxime intermediate, via ustiloxin H. Finally, carboxylative dehydration performed by the cysteine desulfurase-like protein ustD yields ustiloxin B. The chain is Oxidase ustYb from Aspergillus flavus (strain ATCC 200026 / FGSC A1120 / IAM 13836 / NRRL 3357 / JCM 12722 / SRRC 167).